Consider the following 134-residue polypeptide: Neuropeptide-like peptide 11 (134 aa).

The first 20 residues, 1–20 (MMSTLALVSLAIFGIAVVCA), serve as a signal peptide directing secretion. The propeptide occupies 21–106 (APKPATVPVA…YNRLIDAGKK (86 aa)). At Ala-131 the chain carries Alanine amide.

The sequence is that of Neuropeptide-like peptide 11 (nlp-11) from Caenorhabditis elegans.